A 274-amino-acid polypeptide reads, in one-letter code: Cytochrome b-c1 complex subunit Rieske, mitochondrial (274 aa).

The tract at residues 29–49 (XXXXXXXXTPEPPVLDPKRPI) is disordered. Residues 79-103 (SHTDIKVPDFSDYRRSEVLDKTKSS) are Mitochondrial matrix-facing. Residues 104–140 (RESSDARKVFSYMVTATTAVGVTYAAKSIVTQFISSM) traverse the membrane as a helical segment. Residues 141 to 274 (SASADVLAMS…FLSDDMVVVG (134 aa)) are Mitochondrial intermembrane-facing. The 86-residue stretch at 187–272 (EAAVELSQLR…YEFLSDDMVV (86 aa)) folds into the Rieske domain. Residues Cys-217, His-219, Cys-236, His-239, and Ser-241 each contribute to the [2Fe-2S] cluster site. A disulfide bond links Cys-222 and Cys-238.

It belongs to the Rieske iron-sulfur protein family. As to quaternary structure, component of the ubiquinol-cytochrome c oxidoreductase (cytochrome b-c1 complex, complex III, CIII), a multisubunit enzyme composed of 11 subunits. The complex is composed of 3 respiratory subunits cytochrome b, cytochrome c1 and Rieske protein UQCRFS1, 2 core protein subunits UQCRC1/QCR1 and UQCRC2/QCR2, and 6 low-molecular weight protein subunits UQCRH/QCR6, UQCRB/QCR7, UQCRQ/QCR8, UQCR10/QCR9, UQCR11/QCR10 and subunit 9, the cleavage product of Rieske protein UQCRFS1. The complex exists as an obligatory dimer and forms supercomplexes (SCs) in the inner mitochondrial membrane with NADH-ubiquinone oxidoreductase (complex I, CI) and cytochrome c oxidase (complex IV, CIV), resulting in different assemblies (supercomplex SCI(1)III(2)IV(1) and megacomplex MCI(2)III(2)IV(2)). Incorporation of the Rieske protein UQCRFS1 is the penultimate step in complex III assembly. Interacts with TTC19, which is involved in the clearance of UQCRFS1 fragments. Component of the ubiquinol-cytochrome c oxidoreductase (cytochrome b-c1 complex, complex III, CIII). Subunit 9 corresponds to the mitochondrial targeting sequence (MTS) of Rieske protein UQCRFS1. It is retained after processing and incorporated inside complex III, where it remains bound to the complex and localizes between the 2 core subunits UQCRC1/QCR1 and UQCRC2/QCR2. [2Fe-2S] cluster serves as cofactor. Post-translationally, proteolytic processing is necessary for the correct insertion of UQCRFS1 in the complex III dimer. Several fragments are generated during UQCRFS1 insertion, most probably due to the endogenous matrix-processing peptidase (MPP) activity of the 2 core protein subunits UQCRC1/QCR1 and UQCRC2/QCR2, which are homologous to the 2 mitochondrial-processing peptidase (MPP) subunits beta-MPP and alpha-MPP respectively. The action of the protease is also necessary for the clearance of the UQCRFS1 fragments.

It localises to the mitochondrion inner membrane. The enzyme catalyses a quinol + 2 Fe(III)-[cytochrome c](out) = a quinone + 2 Fe(II)-[cytochrome c](out) + 2 H(+)(out). Component of the ubiquinol-cytochrome c oxidoreductase, a multisubunit transmembrane complex that is part of the mitochondrial electron transport chain which drives oxidative phosphorylation. The respiratory chain contains 3 multisubunit complexes succinate dehydrogenase (complex II, CII), ubiquinol-cytochrome c oxidoreductase (cytochrome b-c1 complex, complex III, CIII) and cytochrome c oxidase (complex IV, CIV), that cooperate to transfer electrons derived from NADH and succinate to molecular oxygen, creating an electrochemical gradient over the inner membrane that drives transmembrane transport and the ATP synthase. The cytochrome b-c1 complex catalyzes electron transfer from ubiquinol to cytochrome c, linking this redox reaction to translocation of protons across the mitochondrial inner membrane, with protons being carried across the membrane as hydrogens on the quinol. In the process called Q cycle, 2 protons are consumed from the matrix, 4 protons are released into the intermembrane space and 2 electrons are passed to cytochrome c. The Rieske protein is a catalytic core subunit containing a [2Fe-2S] iron-sulfur cluster. It cycles between 2 conformational states during catalysis to transfer electrons from the quinol bound in the Q(0) site in cytochrome b to cytochrome c1. Incorporation of UQCRFS1 is the penultimate step in complex III assembly. Functionally, component of the ubiquinol-cytochrome c oxidoreductase (cytochrome b-c1 complex, complex III, CIII). UQCRFS1 undergoes proteolytic processing once it is incorporated in the complex III dimer. One of the fragments, called subunit 9, corresponds to its mitochondrial targeting sequence (MTS). The proteolytic processing is necessary for the correct insertion of UQCRFS1 in the complex III dimer, but the persistence of UQCRFS1-derived fragments may prevent newly imported UQCRFS1 to be processed and assembled into complex III and is detrimental for the complex III structure and function. This is Cytochrome b-c1 complex subunit Rieske, mitochondrial (UQCRFS1) from Saimiri sciureus (Common squirrel monkey).